Reading from the N-terminus, the 776-residue chain is Photosystem I P700 chlorophyll a apoprotein A1 (776 aa).

The next 8 helical transmembrane spans lie at 76-99 (IFSAHFGHLAIVFIWLSGAFFHGA), 162-185 (LMALATGALIMAGLVLHGGIFHYH), 201-225 (LQHHQIGLFGLGSLGWTGHLIHVAN), 309-327 (VAHHHLAWAVFLMFGGHVY), 368-391 (WHAQLAVNLACIGSGSIVVAHHMY), 407-433 (LGLFTHHMWIGGLMICGAAAHAGIAVI), 455-477 (AIISHLNWVCMFLGFHSFGLYIH), and 557-575 (LMIHHIHAFTIHVTCLILL). Residues Cys-599 and Cys-608 each coordinate [4Fe-4S] cluster. 2 helical membrane passes run 615–636 (HVFLGLFWMYNSLSMVIFYFSW) and 690–712 (LSGYGLLFLGGHFVWAFSLMFLF). His-701 contributes to the divinylchlorophyll a' binding site. Residues Met-709 and Tyr-717 each coordinate divinyl chlorophyll a. Trp-718 serves as a coordination point for phylloquinone. Residues 750–770 (AVGVTHFLFGGIVTTWAFFHA) form a helical membrane-spanning segment.

The protein belongs to the PsaA/PsaB family. The PsaA/B heterodimer binds the P700 divinyl chlorophyll special pair and subsequent electron acceptors. PSI consists of a core antenna complex that captures photons, and an electron transfer chain that converts photonic excitation into a charge separation. The cyanobacterial PSI reaction center is composed of one copy each of PsaA,B,C,D,E,F,I,J,K,L,M and X, and forms trimeric complexes. PSI electron transfer chain: 5 divinyl chlorophyll a, 1 divinyl chlorophyll a', 2 phylloquinones and 3 4Fe-4S clusters. PSI core antenna: 90 divinyl chlorophyll a, 22 carotenoids, 3 phospholipids and 1 galactolipid. P700 is a divinyl chlorophyll a/divinyl chlorophyll a' dimer, A0 is one or more divinyl chlorophyll a, A1 is one or both phylloquinones and FX is a shared 4Fe-4S iron-sulfur center. is required as a cofactor.

It is found in the cellular thylakoid membrane. The enzyme catalyses reduced [plastocyanin] + hnu + oxidized [2Fe-2S]-[ferredoxin] = oxidized [plastocyanin] + reduced [2Fe-2S]-[ferredoxin]. PsaA and PsaB bind P700, the primary electron donor of photosystem I (PSI), as well as the electron acceptors A0, A1 and FX. PSI is a plastocyanin/cytochrome c6-ferredoxin oxidoreductase, converting photonic excitation into a charge separation, which transfers an electron from the donor P700 chlorophyll pair to the spectroscopically characterized acceptors A0, A1, FX, FA and FB in turn. Oxidized P700 is reduced on the lumenal side of the thylakoid membrane by plastocyanin or cytochrome c6. The polypeptide is Photosystem I P700 chlorophyll a apoprotein A1 (Prochlorococcus marinus (strain MIT 9303)).